The chain runs to 754 residues: 5-methyltetrahydropteroyltriglutamate--homocysteine methyltransferase (754 aa).

5-methyltetrahydropteroyltri-L-glutamate contacts are provided by residues 17–20 and lysine 110; that span reads RELK. L-homocysteine-binding positions include 421–423 and glutamate 474; that span reads IGS. Residues 421–423 and glutamate 474 contribute to the L-methionine site; that span reads IGS. Residues 505–506 and tryptophan 551 contribute to the 5-methyltetrahydropteroyltri-L-glutamate site; that span reads RC. Aspartate 589 lines the L-homocysteine pocket. Aspartate 589 serves as a coordination point for L-methionine. Glutamate 595 contacts 5-methyltetrahydropteroyltri-L-glutamate. Residues histidine 631, cysteine 633, and glutamate 655 each contribute to the Zn(2+) site. The Proton donor role is filled by histidine 684. Residue cysteine 716 participates in Zn(2+) binding.

The protein belongs to the vitamin-B12 independent methionine synthase family. Zn(2+) serves as cofactor.

The catalysed reaction is 5-methyltetrahydropteroyltri-L-glutamate + L-homocysteine = tetrahydropteroyltri-L-glutamate + L-methionine. It functions in the pathway amino-acid biosynthesis; L-methionine biosynthesis via de novo pathway; L-methionine from L-homocysteine (MetE route): step 1/1. Its function is as follows. Catalyzes the transfer of a methyl group from 5-methyltetrahydrofolate to homocysteine resulting in methionine formation. This Synechococcus sp. (strain JA-2-3B'a(2-13)) (Cyanobacteria bacterium Yellowstone B-Prime) protein is 5-methyltetrahydropteroyltriglutamate--homocysteine methyltransferase.